The chain runs to 124 residues: uncharacterized protein (124 aa).

Residues 73-94 (CEETGAPIPLAKLAVLPTARTA) form a dksA C4-type; degenerate zinc finger.

This is an uncharacterized protein from Bacillus subtilis (strain 168).